We begin with the raw amino-acid sequence, 228 residues long: Biopolymer transport protein exbB1 (228 aa).

The next 3 helical transmembrane spans lie at 11–31 (LGLMAWPLFICSALTVMLLAE), 116–136 (LTLIGVISPLLGLLGTVLGLI), and 158–178 (LGVAMYTTAAGLLIAVPAVAG).

It belongs to the ExbB/TolQ family. In terms of assembly, the accessory proteins ExbB and ExbD seem to form a complex with TonB.

It localises to the cell inner membrane. Involved in the TonB-dependent energy-dependent transport of various receptor-bound substrates. Protects ExbD from proteolytic degradation and functionally stabilizes TonB. This Vibrio cholerae serotype O1 (strain ATCC 39315 / El Tor Inaba N16961) protein is Biopolymer transport protein exbB1 (exbB1).